We begin with the raw amino-acid sequence, 156 residues long: Small ribosomal subunit protein uS7 (156 aa).

The protein belongs to the universal ribosomal protein uS7 family. As to quaternary structure, part of the 30S ribosomal subunit. Contacts proteins S9 and S11.

Its function is as follows. One of the primary rRNA binding proteins, it binds directly to 16S rRNA where it nucleates assembly of the head domain of the 30S subunit. Is located at the subunit interface close to the decoding center, probably blocks exit of the E-site tRNA. The protein is Small ribosomal subunit protein uS7 of Geobacillus kaustophilus (strain HTA426).